Reading from the N-terminus, the 760-residue chain is Microprocessor complex subunit DGCR8 (760 aa).

The interval 1 to 71 is disordered; it reads METCGSPSPL…PAEDPLNFYG (71 aa). Residues 1 to 275 form a necessary for nuclear localization and retention region; the sequence is METCGSPSPL…KYGGDSDHPS (275 aa). Positions 1-342 are necessary for interaction with NCL; the sequence is METCGSPSPL…YFLGTGSIRK (342 aa). 5 positions are modified to phosphoserine: Ser35, Ser92, Ser95, Ser271, and Ser275. Over residues 263–276 the composition is skewed to basic and acidic residues; sequence MEEKYGGDSDHPSD. The disordered stretch occupies residues 263-284; that stretch reads MEEKYGGDSDHPSDGETSVQPM. The tract at residues 276-738 is necessary for heme-binding and pri-miRNA processing; it reads DGETSVQPMM…LAEEREETRK (463 aa). Thr279 is modified (phosphothreonine). One can recognise a WW domain in the interval 301–334; that stretch reads EPLPDGWIMTFHNSGVPVYLHRESRVVTWSRPYF. A heme-binding site is contributed by Cys352. The segment at 361–405 is disordered; it reads SEERERAAGIAPPEPELPPDEPDPLGTDAGPPDEKDPLGAEAAPG. Glycyl lysine isopeptide (Lys-Gly) (interchain with G-Cter in SUMO2) cross-links involve residues Lys411 and Lys487. DRBM domains lie at 498-565 and 606-673; these read SEVC…ILIP and SPYQ…LLHP. At Ser664 the chain carries Phosphoserine. Positions 688 to 760 are interaction with DROSHA; that stretch reads ESSKMVKQET…GGEPLCTVDV (73 aa). Lys694 is covalently cross-linked (Glycyl lysine isopeptide (Lys-Gly) (interchain with G-Cter in SUMO2)). Residues 731 to 760 are disordered; the sequence is EEREETRKKPKMSIVASAQPGGEPLCTVDV.

In terms of assembly, monomer; in absence of heme. Homodimer; the association with heme promotes its dimerization. Component of the microprocessor complex, or pri-miRNA processing protein complex, which is composed of DROSHA and DGCR8. The microprocessor complex is a heterotrimer; each of the two DROSHA RNase III domains binds one DGCR8 (via C-terminal region). Interacts with ILF3, NCL and DROSHA. Interacts with CPSF3 and ISY1; this interaction is in an RNA dependent manner. Interacts with PUS10; interaction promotes pri-miRNAs processing. Heme serves as cofactor. Post-translationally, phosphorylated at Ser-664 by ATM upon radiation, which is crucial for its stability. In terms of processing, ubiquitinated, leading to degradation in a proteasome-dependent manner. Deubiquitinated by USP51, leading to stabilization.

Its subcellular location is the nucleus. The protein localises to the nucleolus. Its function is as follows. Component of the microprocessor complex that acts as a RNA- and heme-binding protein that is involved in the initial step of microRNA (miRNA) biogenesis. Component of the microprocessor complex that is required to process primary miRNA transcripts (pri-miRNAs) to release precursor miRNA (pre-miRNA) in the nucleus. Within the microprocessor complex, DGCR8 function as a molecular anchor necessary for the recognition of pri-miRNA at dsRNA-ssRNA junction and directs DROSHA to cleave 11 bp away form the junction to release hairpin-shaped pre-miRNAs that are subsequently cut by the cytoplasmic DICER to generate mature miRNAs. The heme-bound DGCR8 dimer binds pri-miRNAs as a cooperative trimer (of dimers) and is active in triggering pri-miRNA cleavage, whereas the heme-free DGCR8 monomer binds pri-miRNAs as a dimer and is much less active. Both double-stranded and single-stranded regions of a pri-miRNA are required for its binding. Specifically recognizes and binds N6-methyladenosine (m6A)-containing pri-miRNAs, a modification required for pri-miRNAs processing. Involved in the silencing of embryonic stem cell self-renewal. Plays also a role in DNA repair by promoting the recruitment of RNF168 to RNF8 and MDC1 at DNA double-strand breaks and subsequently the clearance of DNA breaks. In Bos taurus (Bovine), this protein is Microprocessor complex subunit DGCR8 (DGCR8).